Consider the following 60-residue polypeptide: U1-theraphotoxin-Agm3a (60 aa).

An N-terminal signal peptide occupies residues 1-21 (MKFSVLVFILGLVLLLALSSA). Positions 22–29 (TEMEENAR) are excised as a propeptide. 3 disulfide bridges follow: C31-C45, C38-C50, and C44-C57.

This sequence belongs to the neurotoxin 10 (Hwtx-1) family. 63 (VsTx1) subfamily. Expressed by the venom gland.

The protein resides in the secreted. Its function is as follows. Inhibits sodium channels Nav1.7/SCN9A and potassium channels Kv11.1/KCNH2. Also binds the voltage-sensor domain of the potassium channel KvAP (from the archaeon Aeropyrum pernix) with very slow apparent binding kinetics and affects channel gating. Reaches its target by dynamically partitioning into anionic or zwitterionic headgroup lipid membranes. May bind to the open state of KvAP. In Acanthoscurria gomesiana (Tarantula spider), this protein is U1-theraphotoxin-Agm3a.